We begin with the raw amino-acid sequence, 543 residues long: Chaperonin GroEL 1 (543 aa).

ATP contacts are provided by residues 29–32 (TLGP), 86–90 (DGTTT), glycine 413, 479–481 (NAA), and aspartate 495.

Belongs to the chaperonin (HSP60) family. Forms a cylinder of 14 subunits composed of two heptameric rings stacked back-to-back. Interacts with the co-chaperonin GroES.

The protein localises to the cytoplasm. It catalyses the reaction ATP + H2O + a folded polypeptide = ADP + phosphate + an unfolded polypeptide.. Its function is as follows. Together with its co-chaperonin GroES, plays an essential role in assisting protein folding. The GroEL-GroES system forms a nano-cage that allows encapsulation of the non-native substrate proteins and provides a physical environment optimized to promote and accelerate protein folding. The chain is Chaperonin GroEL 1 from Prochlorococcus marinus (strain NATL2A).